A 280-amino-acid chain; its full sequence is Succinate dehydrogenase [ubiquinone] iron-sulfur subunit, mitochondrial (280 aa).

A mitochondrion-targeting transit peptide spans 1–28 (MAAVVALSLRRRLPATTLGGACLQASRG). In terms of domain architecture, 2Fe-2S ferredoxin-type spans 40 to 133 (KKFAIYRWDP…VSKIYPLPHM (94 aa)). 2 positions are modified to N6-acetyllysine: Lys51 and Lys55. Cys93, Cys98, Cys101, and Cys113 together coordinate [2Fe-2S] cluster. Residues 146 to 218 (FYAQYKSIEP…PAVLMQAYRW (73 aa)) form an interaction with SDHAF1 region. The region spanning 176–206 (EREKLDGLYECILCACCSTSCPSYWWNGDKY) is the 4Fe-4S ferredoxin-type domain. Residues Cys186, Cys189, and Cys192 each coordinate [4Fe-4S] cluster. Residue Cys196 coordinates [3Fe-4S] cluster. Trp201 lines the a ubiquinone pocket. Residues Cys243 and Cys249 each coordinate [3Fe-4S] cluster. Cys253 lines the [4Fe-4S] cluster pocket.

This sequence belongs to the succinate dehydrogenase/fumarate reductase iron-sulfur protein family. In terms of assembly, component of complex II composed of four subunits: the flavoprotein (FP) SDHA, iron-sulfur protein (IP) SDHB, and a cytochrome b560 composed of SDHC and SDHD. Interacts with SDHAF1; the interaction is required for iron-sulfur cluster incorporation into SDHB. As to quaternary structure, (Microbial infection) Interacts with JC virus small t antigen. It depends on [2Fe-2S] cluster as a cofactor. The cofactor is [3Fe-4S] cluster. Requires [4Fe-4S] cluster as cofactor.

Its subcellular location is the mitochondrion inner membrane. It carries out the reaction a quinone + succinate = fumarate + a quinol. The catalysed reaction is (R)-malate + a quinone = enol-oxaloacetate + a quinol. The enzyme catalyses (S)-malate + a quinone = enol-oxaloacetate + a quinol. It participates in carbohydrate metabolism; tricarboxylic acid cycle; fumarate from succinate (eukaryal route): step 1/1. Its activity is regulated as follows. Enol-oxaloacetate inhibits the succinate dehydrogenase activity. Functionally, iron-sulfur protein (IP) subunit of the succinate dehydrogenase complex (mitochondrial respiratory chain complex II), responsible for transferring electrons from succinate to ubiquinone (coenzyme Q). SDH also oxidizes malate to the non-canonical enol form of oxaloacetate, enol-oxaloacetate. Enol-oxaloacetate, which is a potent inhibitor of the succinate dehydrogenase activity, is further isomerized into keto-oxaloacetate. This is Succinate dehydrogenase [ubiquinone] iron-sulfur subunit, mitochondrial (SDHB) from Homo sapiens (Human).